We begin with the raw amino-acid sequence, 163 residues long: Crossover junction endodeoxyribonuclease RuvC (163 aa).

Catalysis depends on residues Asp8, Glu68, and Asp140. Mg(2+)-binding residues include Asp8, Glu68, and Asp140.

The protein belongs to the RuvC family. As to quaternary structure, homodimer which binds Holliday junction (HJ) DNA. The HJ becomes 2-fold symmetrical on binding to RuvC with unstacked arms; it has a different conformation from HJ DNA in complex with RuvA. In the full resolvosome a probable DNA-RuvA(4)-RuvB(12)-RuvC(2) complex forms which resolves the HJ. It depends on Mg(2+) as a cofactor.

The protein localises to the cytoplasm. It catalyses the reaction Endonucleolytic cleavage at a junction such as a reciprocal single-stranded crossover between two homologous DNA duplexes (Holliday junction).. In terms of biological role, the RuvA-RuvB-RuvC complex processes Holliday junction (HJ) DNA during genetic recombination and DNA repair. Endonuclease that resolves HJ intermediates. Cleaves cruciform DNA by making single-stranded nicks across the HJ at symmetrical positions within the homologous arms, yielding a 5'-phosphate and a 3'-hydroxyl group; requires a central core of homology in the junction. The consensus cleavage sequence is 5'-(A/T)TT(C/G)-3'. Cleavage occurs on the 3'-side of the TT dinucleotide at the point of strand exchange. HJ branch migration catalyzed by RuvA-RuvB allows RuvC to scan DNA until it finds its consensus sequence, where it cleaves and resolves the cruciform DNA. This chain is Crossover junction endodeoxyribonuclease RuvC, found in Erythrobacter litoralis (strain HTCC2594).